The primary structure comprises 103 residues: Large ribosomal subunit protein bL21 (103 aa).

Belongs to the bacterial ribosomal protein bL21 family. In terms of assembly, part of the 50S ribosomal subunit. Contacts protein L20.

This protein binds to 23S rRNA in the presence of protein L20. The chain is Large ribosomal subunit protein bL21 from Chloroflexus aggregans (strain MD-66 / DSM 9485).